A 2430-amino-acid polypeptide reads, in one-letter code: DNA-directed RNA polymerase subunit beta'' (2430 aa).

4 residues coordinate Zn(2+): cysteine 336, cysteine 455, cysteine 462, and cysteine 465.

The protein belongs to the RNA polymerase beta' chain family. RpoC2 subfamily. In plastids the minimal PEP RNA polymerase catalytic core is composed of four subunits: alpha, beta, beta', and beta''. When a (nuclear-encoded) sigma factor is associated with the core the holoenzyme is formed, which can initiate transcription. Zn(2+) is required as a cofactor.

It is found in the plastid. Its subcellular location is the chloroplast. It catalyses the reaction RNA(n) + a ribonucleoside 5'-triphosphate = RNA(n+1) + diphosphate. DNA-dependent RNA polymerase catalyzes the transcription of DNA into RNA using the four ribonucleoside triphosphates as substrates. The polypeptide is DNA-directed RNA polymerase subunit beta'' (Stigeoclonium helveticum (Green alga)).